The sequence spans 283 residues: 4-hydroxy-3-methylbut-2-enyl diphosphate reductase (283 aa).

Residue cysteine 12 participates in [4Fe-4S] cluster binding. Residues histidine 41 and histidine 74 each coordinate (2E)-4-hydroxy-3-methylbut-2-enyl diphosphate. 2 residues coordinate dimethylallyl diphosphate: histidine 41 and histidine 74. Isopentenyl diphosphate contacts are provided by histidine 41 and histidine 74. Cysteine 96 is a [4Fe-4S] cluster binding site. Residue histidine 124 coordinates (2E)-4-hydroxy-3-methylbut-2-enyl diphosphate. Histidine 124 serves as a coordination point for dimethylallyl diphosphate. Residue histidine 124 coordinates isopentenyl diphosphate. The Proton donor role is filled by glutamate 126. Position 161 (threonine 161) interacts with (2E)-4-hydroxy-3-methylbut-2-enyl diphosphate. Cysteine 189 serves as a coordination point for [4Fe-4S] cluster. 3 residues coordinate (2E)-4-hydroxy-3-methylbut-2-enyl diphosphate: serine 217, asparagine 219, and serine 261. Dimethylallyl diphosphate contacts are provided by serine 217, asparagine 219, and serine 261. Residues serine 217, asparagine 219, and serine 261 each coordinate isopentenyl diphosphate.

It belongs to the IspH family. [4Fe-4S] cluster is required as a cofactor.

It carries out the reaction isopentenyl diphosphate + 2 oxidized [2Fe-2S]-[ferredoxin] + H2O = (2E)-4-hydroxy-3-methylbut-2-enyl diphosphate + 2 reduced [2Fe-2S]-[ferredoxin] + 2 H(+). The enzyme catalyses dimethylallyl diphosphate + 2 oxidized [2Fe-2S]-[ferredoxin] + H2O = (2E)-4-hydroxy-3-methylbut-2-enyl diphosphate + 2 reduced [2Fe-2S]-[ferredoxin] + 2 H(+). It functions in the pathway isoprenoid biosynthesis; dimethylallyl diphosphate biosynthesis; dimethylallyl diphosphate from (2E)-4-hydroxy-3-methylbutenyl diphosphate: step 1/1. The protein operates within isoprenoid biosynthesis; isopentenyl diphosphate biosynthesis via DXP pathway; isopentenyl diphosphate from 1-deoxy-D-xylulose 5-phosphate: step 6/6. In terms of biological role, catalyzes the conversion of 1-hydroxy-2-methyl-2-(E)-butenyl 4-diphosphate (HMBPP) into a mixture of isopentenyl diphosphate (IPP) and dimethylallyl diphosphate (DMAPP). Acts in the terminal step of the DOXP/MEP pathway for isoprenoid precursor biosynthesis. This Anaeromyxobacter sp. (strain Fw109-5) protein is 4-hydroxy-3-methylbut-2-enyl diphosphate reductase.